A 325-amino-acid chain; its full sequence is Melanocortin receptor 5 (325 aa).

Residues 1–37 (MNSSFHLHFLDLGLNATEGNLSGLSVRNASSPCEDMG) lie on the Extracellular side of the membrane. Asparagine 2, asparagine 15, asparagine 20, and asparagine 28 each carry an N-linked (GlcNAc...) asparagine glycan. The helical transmembrane segment at 38 to 61 (IAVEVFLALGLISLLENILVIGAI) threads the bilayer. Over 62 to 73 (VRNRNLHIPMYF) the chain is Cytoplasmic. Residues 74–97 (FVGSLAVADMLVSLSNFWETITIY) form a helical membrane-spanning segment. Topologically, residues 98 to 114 (LLTNKHLVMADASVRHL) are extracellular. Residues 115-138 (DNVFDSMICISVVASMCSLLAIAV) form a helical membrane-spanning segment. Residues 139–155 (DRYVTIFCRLRYQRIMT) are Cytoplasmic-facing. A helical membrane pass occupies residues 156–179 (GRRSGAIIAGIWAFCTSCGTVFIV). Topologically, residues 180–186 (YYESTYV) are extracellular. The chain crosses the membrane as a helical span at residues 187–211 (VVCLIAMFLTMLLLMASLYTHMFLL). Over 212-239 (ARTHVRRIAALPGHSSVRQRTGVKGAIT) the chain is Cytoplasmic. Residues 240–265 (LAMLLGVFIICWAPFFLHLILMISCP) traverse the membrane as a helical segment. Residues 266–273 (QNLYCSCF) lie on the Extracellular side of the membrane. Residues 274–297 (MSHFNMYLILIMCNSVIDPLIYAF) form a helical membrane-spanning segment. The Cytoplasmic portion of the chain corresponds to 298 to 325 (RSQEMRKTFKEIVCFQGFRTPCRFPSTY). Cysteine 311 carries S-palmitoyl cysteine lipidation.

Belongs to the G-protein coupled receptor 1 family.

It is found in the cell membrane. Its function is as follows. Receptor for MSH (alpha, beta and gamma) and ACTH. The activity of this receptor is mediated by G proteins which activate adenylate cyclase. This receptor is a possible mediator of the immunomodulation properties of melanocortins. The protein is Melanocortin receptor 5 (MC5R) of Ovis aries (Sheep).